The chain runs to 254 residues: Triosephosphate isomerase (254 aa).

9–11 contributes to the substrate binding site; that stretch reads NWK. The active-site Electrophile is His96. Glu169 acts as the Proton acceptor in catalysis. Residues Gly175, Ser215, and 236 to 237 contribute to the substrate site; that span reads GG.

Belongs to the triosephosphate isomerase family. In terms of assembly, homodimer.

It localises to the cytoplasm. It carries out the reaction D-glyceraldehyde 3-phosphate = dihydroxyacetone phosphate. It functions in the pathway carbohydrate biosynthesis; gluconeogenesis. Its pathway is carbohydrate degradation; glycolysis; D-glyceraldehyde 3-phosphate from glycerone phosphate: step 1/1. Involved in the gluconeogenesis. Catalyzes stereospecifically the conversion of dihydroxyacetone phosphate (DHAP) to D-glyceraldehyde-3-phosphate (G3P). The chain is Triosephosphate isomerase from Borrelia recurrentis (strain A1).